Here is a 520-residue protein sequence, read N- to C-terminus: GMP synthase [glutamine-hydrolyzing] (520 aa).

A Glutamine amidotransferase type-1 domain is found at 9–202; sequence TILIIDFGSQ…VHRIVGVKPG (194 aa). The active-site Nucleophile is C86. Residues H176 and E178 contribute to the active site. In terms of domain architecture, GMPS ATP-PPase spans 203–395; the sequence is WTMGAYREQA…LGLPDSFIGR (193 aa). 230–236 contributes to the ATP binding site; it reads SGGVDSS.

In terms of assembly, homodimer.

It carries out the reaction XMP + L-glutamine + ATP + H2O = GMP + L-glutamate + AMP + diphosphate + 2 H(+). Its pathway is purine metabolism; GMP biosynthesis; GMP from XMP (L-Gln route): step 1/1. In terms of biological role, catalyzes the synthesis of GMP from XMP. This is GMP synthase [glutamine-hydrolyzing] from Brucella canis (strain ATCC 23365 / NCTC 10854 / RM-666).